A 630-amino-acid chain; its full sequence is Angiotensin-converting enzyme-related protein (630 aa).

The first 22 residues, 1 to 22 (MGACNITVLLLVIMLWLPHGLS), serve as a signal peptide directing secretion. The Peptidase M2 domain maps to 28–615 (SASVLEARRF…SRLGVPLGWG (588 aa)). 2 cysteine pairs are disulfide-bonded: cysteine 142-cysteine 150 and cysteine 344-cysteine 362. Histidine 375 lines the Zn(2+) pocket. Glutamate 376 acts as the Proton acceptor in catalysis. Positions 379 and 403 each coordinate Zn(2+). Catalysis depends on histidine 505, which acts as the Proton donor. The cysteines at positions 530 and 548 are disulfide-linked.

The protein belongs to the peptidase M2 family. Zn(2+) is required as a cofactor. Glycosylated.

Its subcellular location is the secreted. The protein localises to the extracellular space. It catalyses the reaction Release of a C-terminal dipeptide, oligopeptide-|-Xaa-Yaa, when Xaa is not Pro, and Yaa is neither Asp nor Glu. Thus, conversion of angiotensin I to angiotensin II, with increase in vasoconstrictor activity, but no action on angiotensin II.. Inhibited by captopril, lisinopril, trandolaprilat, fosinoprilat and enalaprilat. Its function is as follows. May be involved in the specific maturation or degradation of a number of bioactive peptides. May have a role in the specification of heart progenitors. This Drosophila melanogaster (Fruit fly) protein is Angiotensin-converting enzyme-related protein (Acer).